The sequence spans 255 residues: MGIRIIIAGYRGKMGSTALSMAQNEEDFEVVALLDPNAKEKEFQGIPVYNLKEDLKTIDAEVWVDFTHPEVAFENTHFAIEQGFAPVVGTTGFTSKEIENLIQLSSDKNIGGLIAPNFAIGALLLMEFAERAAKYFPNVEIIELHHDQKKDAPSGTALKTAEVISKERQEITQGHPDEVESLPGARGANYQGMHIHSVRLPGLVAHQEVLFGGPGEGLTLRHDSYDRQSFMQGVKIGIREVVKRNQLVYGLEKLL.

NAD(+) contacts are provided by residues 9 to 14 (GYRGKM), 89 to 91 (GTT), and 115 to 118 (APNF). The active-site Proton donor/acceptor is the His-145. Residue His-146 coordinates (S)-2,3,4,5-tetrahydrodipicolinate. The Proton donor role is filled by Lys-149. (S)-2,3,4,5-tetrahydrodipicolinate is bound at residue 155–156 (GT).

This sequence belongs to the DapB family.

The protein resides in the cytoplasm. The enzyme catalyses (S)-2,3,4,5-tetrahydrodipicolinate + NAD(+) + H2O = (2S,4S)-4-hydroxy-2,3,4,5-tetrahydrodipicolinate + NADH + H(+). It catalyses the reaction (S)-2,3,4,5-tetrahydrodipicolinate + NADP(+) + H2O = (2S,4S)-4-hydroxy-2,3,4,5-tetrahydrodipicolinate + NADPH + H(+). The protein operates within amino-acid biosynthesis; L-lysine biosynthesis via DAP pathway; (S)-tetrahydrodipicolinate from L-aspartate: step 4/4. Its function is as follows. Catalyzes the conversion of 4-hydroxy-tetrahydrodipicolinate (HTPA) to tetrahydrodipicolinate. This Streptococcus uberis (strain ATCC BAA-854 / 0140J) protein is 4-hydroxy-tetrahydrodipicolinate reductase.